Here is a 1549-residue protein sequence, read N- to C-terminus: Zinc finger MYM-type protein 4 (1549 aa).

The residue at position 2 (alanine 2) is an N-acetylalanine. The segment at 83–108 is disordered; it reads VVSSDNEDEQDCSSKDNLVSSVHTDG. The span at 97-106 shows a compositional bias: polar residues; sequence KDNLVSSVHT. Phosphothreonine is present on threonine 106. 2 positions are modified to phosphoserine: serine 109 and serine 121. Glycyl lysine isopeptide (Lys-Gly) (interchain with G-Cter in SUMO2) cross-links involve residues lysine 139 and lysine 148. A Phosphoserine modification is found at serine 161. Lysine 195 is covalently cross-linked (Glycyl lysine isopeptide (Lys-Gly) (interchain with G-Cter in SUMO2)). Phosphoserine is present on serine 197. Residues lysine 201 and lysine 232 each participate in a glycyl lysine isopeptide (Lys-Gly) (interchain with G-Cter in SUMO2) cross-link. The residue at position 242 (serine 242) is a Phosphoserine. Lysine 250 participates in a covalent cross-link: Glycyl lysine isopeptide (Lys-Gly) (interchain with G-Cter in SUMO1); alternate. Residue lysine 250 forms a Glycyl lysine isopeptide (Lys-Gly) (interchain with G-Cter in SUMO2); alternate linkage. The interval 267–291 is disordered; it reads GLLDRVKDEPDNAQEYSHGQQQKTQ. Residues lysine 273, lysine 289, lysine 327, lysine 400, lysine 428, and lysine 430 each participate in a glycyl lysine isopeptide (Lys-Gly) (interchain with G-Cter in SUMO2) cross-link. Residues 280-290 show a composition bias toward polar residues; that stretch reads QEYSHGQQQKT. 9 consecutive MYM-type zinc fingers follow at residues 362–402, 414–457, 464–499, 510–544, 554–592, 600–631, 708–742, 749–788, and 795–829; these read QLFC…PKDV, KDFC…RHEV, HKLCSDACFSKFRSANNLTMNCCENCGGYCYSGSGQ, KKFCSSMCVTSYKQKSAKITPCALCKSLRSSAEMI, ELFCSVNCLSAYRVKMVTSAGVQVQCNSCKTSAIPQYHL, RNFCSYSCVVAFQNLFNKPTGMNSSVVPLSQG, FQFCGKNCCDEYKKINNVMAMCEYCKIEKIIKETV, KSFCSEGCKLLYKHDLGKRWGSHCKMCSYCLQTSPKLIQN, and EDFCCEECMSKYTVLFYQMAKCDGCKRQGKLSESL. Residues lysine 1035 and lysine 1062 each participate in a glycyl lysine isopeptide (Lys-Gly) (interchain with G-Cter in SUMO2) cross-link. Residues serine 1065 and serine 1072 each carry the phosphoserine modification. Residues lysine 1081 and lysine 1128 each participate in a glycyl lysine isopeptide (Lys-Gly) (interchain with G-Cter in SUMO2) cross-link. The disordered stretch occupies residues 1124 to 1185; that stretch reads DSELKPFSKG…RRGRKKSVVP (62 aa). Positions 1125–1135 are enriched in basic and acidic residues; that stretch reads SELKPFSKGET. A compositionally biased stretch (basic residues) spans 1161 to 1182; the sequence is SRTRRRHRDGFPQPRRRGRKKS. A phosphoserine mark is found at serine 1182 and serine 1257. Lysine 1432 is covalently cross-linked (Glycyl lysine isopeptide (Lys-Gly) (interchain with G-Cter in SUMO2)). Residues serine 1540, serine 1543, and serine 1548 each carry the phosphoserine modification.

Its function is as follows. Plays a role in the regulation of cell morphology and cytoskeletal organization. The chain is Zinc finger MYM-type protein 4 (Zmym4) from Mus musculus (Mouse).